Reading from the N-terminus, the 758-residue chain is Catalase-peroxidase (758 aa).

Over residues 1 to 10 the composition is skewed to polar residues; it reads MSDTQDNAPV. Positions 1-57 are disordered; the sequence is MSDTQDNAPVSAQGVDQKAAAGCPVAHDSVTAHGSESESPAIDSPSAVGGGRPRTNR. Positions 128 to 250 form a cross-link, tryptophyl-tyrosyl-methioninium (Trp-Tyr) (with M-276); it reads WHAAGTYRIH…VGATEMGLIY (123 aa). The active-site Proton acceptor is the H129. Positions 250–276 form a cross-link, tryptophyl-tyrosyl-methioninium (Tyr-Met) (with W-128); the sequence is YVNPEGPRGNADPASAAHFIRETFRRM. H291 is a heme b binding site.

Belongs to the peroxidase family. Peroxidase/catalase subfamily. As to quaternary structure, homodimer or homotetramer. Heme b serves as cofactor. Post-translationally, formation of the three residue Trp-Tyr-Met cross-link is important for the catalase, but not the peroxidase activity of the enzyme.

It catalyses the reaction H2O2 + AH2 = A + 2 H2O. The enzyme catalyses 2 H2O2 = O2 + 2 H2O. Functionally, bifunctional enzyme with both catalase and broad-spectrum peroxidase activity. The protein is Catalase-peroxidase of Salinispora tropica (strain ATCC BAA-916 / DSM 44818 / JCM 13857 / NBRC 105044 / CNB-440).